The primary structure comprises 339 residues: Outer membrane protein assembly factor BamC (339 aa).

Residues 1 to 19 (MKFSRQLVLGSLAVLVLSA) form the signal peptide. The N-palmitoyl cysteine moiety is linked to residue C20. C20 carries the S-diacylglycerol cysteine lipid modification.

The protein belongs to the BamC family. Part of the Bam complex.

It is found in the cell outer membrane. Its function is as follows. Part of the outer membrane protein assembly complex, which is involved in assembly and insertion of beta-barrel proteins into the outer membrane. This is Outer membrane protein assembly factor BamC from Vibrio cholerae serotype O1 (strain ATCC 39315 / El Tor Inaba N16961).